An 89-amino-acid chain; its full sequence is Small ribosomal subunit protein uS15 (89 aa).

This sequence belongs to the universal ribosomal protein uS15 family. As to quaternary structure, part of the 30S ribosomal subunit. Forms a bridge to the 50S subunit in the 70S ribosome, contacting the 23S rRNA.

Functionally, one of the primary rRNA binding proteins, it binds directly to 16S rRNA where it helps nucleate assembly of the platform of the 30S subunit by binding and bridging several RNA helices of the 16S rRNA. Forms an intersubunit bridge (bridge B4) with the 23S rRNA of the 50S subunit in the ribosome. This Hahella chejuensis (strain KCTC 2396) protein is Small ribosomal subunit protein uS15.